The chain runs to 180 residues: ATP-dependent protease subunit HslV (180 aa).

Threonine 6 is an active-site residue. Residues alanine 164, cysteine 167, and threonine 170 each contribute to the Na(+) site.

The protein belongs to the peptidase T1B family. HslV subfamily. In terms of assembly, a double ring-shaped homohexamer of HslV is capped on each side by a ring-shaped HslU homohexamer. The assembly of the HslU/HslV complex is dependent on binding of ATP.

The protein resides in the cytoplasm. It catalyses the reaction ATP-dependent cleavage of peptide bonds with broad specificity.. Allosterically activated by HslU binding. Functionally, protease subunit of a proteasome-like degradation complex believed to be a general protein degrading machinery. The sequence is that of ATP-dependent protease subunit HslV from Borrelia turicatae (strain 91E135).